The following is a 152-amino-acid chain: Xanthine-guanine phosphoribosyltransferase (152 aa).

5-phospho-alpha-D-ribose 1-diphosphate contacts are provided by residues 37-38, Arg-69, and 88-96; these read RG and DDLVDSGDT. Arg-69 contacts GMP. Asp-89 provides a ligand contact to Mg(2+). Residues Asp-92 and Ile-135 each contribute to the guanine site. Asp-92 and Ile-135 together coordinate xanthine. GMP contacts are provided by residues 92–96 and 134–135; these read DSGDT and WI.

This sequence belongs to the purine/pyrimidine phosphoribosyltransferase family. XGPT subfamily. In terms of assembly, homotetramer. It depends on Mg(2+) as a cofactor.

Its subcellular location is the cell inner membrane. It carries out the reaction GMP + diphosphate = guanine + 5-phospho-alpha-D-ribose 1-diphosphate. It catalyses the reaction XMP + diphosphate = xanthine + 5-phospho-alpha-D-ribose 1-diphosphate. The enzyme catalyses IMP + diphosphate = hypoxanthine + 5-phospho-alpha-D-ribose 1-diphosphate. The protein operates within purine metabolism; GMP biosynthesis via salvage pathway; GMP from guanine: step 1/1. Its pathway is purine metabolism; XMP biosynthesis via salvage pathway; XMP from xanthine: step 1/1. Functionally, purine salvage pathway enzyme that catalyzes the transfer of the ribosyl-5-phosphate group from 5-phospho-alpha-D-ribose 1-diphosphate (PRPP) to the N9 position of the 6-oxopurines guanine and xanthine to form the corresponding ribonucleotides GMP (guanosine 5'-monophosphate) and XMP (xanthosine 5'-monophosphate), with the release of PPi. To a lesser extent, also acts on hypoxanthine. This chain is Xanthine-guanine phosphoribosyltransferase, found in Aliivibrio fischeri (strain ATCC 700601 / ES114) (Vibrio fischeri).